The following is a 116-amino-acid chain: NADH-ubiquinone oxidoreductase chain 3 (116 aa).

The next 3 helical transmembrane spans lie at 4 to 24 (FMVMIMLTLTLSSIMALLAFW), 56 to 76 (FFLVAILFLLFDLEIALLLPS), and 87 to 107 (FTLLWASLFVLLLTLGLIYEW).

The protein belongs to the complex I subunit 3 family.

It is found in the mitochondrion membrane. It catalyses the reaction a ubiquinone + NADH + 5 H(+)(in) = a ubiquinol + NAD(+) + 4 H(+)(out). Core subunit of the mitochondrial membrane respiratory chain NADH dehydrogenase (Complex I) that is believed to belong to the minimal assembly required for catalysis. Complex I functions in the transfer of electrons from NADH to the respiratory chain. The immediate electron acceptor for the enzyme is believed to be ubiquinone. This is NADH-ubiquinone oxidoreductase chain 3 (MT-ND3) from Petromyzon marinus (Sea lamprey).